The chain runs to 465 residues: Iron-sulfur cluster assembly SufBD family protein SAR0880 (465 aa).

Belongs to the iron-sulfur cluster assembly SufBD family.

This chain is Iron-sulfur cluster assembly SufBD family protein SAR0880, found in Staphylococcus aureus (strain MRSA252).